Here is a 466-residue protein sequence, read N- to C-terminus: uncharacterized protein (466 aa).

The C2 NT-type domain occupies 4–199 (NHNSKAKRPK…IINVSLQLKL (196 aa)). Disordered regions lie at residues 262-298 (AKPG…STTI), 374-393 (LGNK…YSTM), and 400-452 (EKKQ…LTDR). The span at 266–298 (TNATGNSTSIKSPTSTNHKSSEMTTKPGLSTTI) shows a compositional bias: polar residues. Phosphoserine occurs at positions 433 and 439.

It to S.pombe SpCC1494.08c.

This is an uncharacterized protein from Saccharomyces cerevisiae (strain ATCC 204508 / S288c) (Baker's yeast).